We begin with the raw amino-acid sequence, 481 residues long: Glutamate--tRNA ligase (481 aa).

The short motif at 28–38 is the 'HIGH' region element; the sequence is PSPTGFLHLGG. Residues 139 to 148 show a composition bias toward basic and acidic residues; the sequence is RYDGTWRPEP. The segment at 139–159 is disordered; it reads RYDGTWRPEPGKTLPPVPADR. The 'KMSKS' region signature appears at 260–264; sequence KLSKR. Lys-263 contacts ATP.

Belongs to the class-I aminoacyl-tRNA synthetase family. Glutamate--tRNA ligase type 1 subfamily. As to quaternary structure, monomer.

It is found in the cytoplasm. It catalyses the reaction tRNA(Glu) + L-glutamate + ATP = L-glutamyl-tRNA(Glu) + AMP + diphosphate. Its function is as follows. Catalyzes the attachment of glutamate to tRNA(Glu) in a two-step reaction: glutamate is first activated by ATP to form Glu-AMP and then transferred to the acceptor end of tRNA(Glu). This chain is Glutamate--tRNA ligase, found in Bordetella parapertussis (strain 12822 / ATCC BAA-587 / NCTC 13253).